Reading from the N-terminus, the 282-residue chain is Fused uL13/uS9 ribosomal subunit protein (282 aa).

The tract at residues 1-141 (MLLMIINGEG…LGEISELLGA (141 aa)) is large ribosomal subunit protein uL13. Residues 150–282 (MKKVIHTSGK…ARARRQKSYR (133 aa)) form a small ribosomal subunit protein uS9 region. The interval 259 to 282 (DPRRSEPKKYGGRGARARRQKSYR) is disordered. Over residues 273 to 282 (ARARRQKSYR) the composition is skewed to basic residues.

In the N-terminal section; belongs to the universal ribosomal protein uL13 family. It in the C-terminal section; belongs to the universal ribosomal protein uS9 family. As to quaternary structure, L13 is part of the 50S ribosomal subunit. S9 is part of the 30S ribosomal subunit.

In terms of biological role, L13 protein is one of the early assembly proteins of the 50S ribosomal subunit, although it is not seen to bind rRNA by itself. It is important during the early stages of 50S assembly. The protein is Fused uL13/uS9 ribosomal subunit protein (rpl13/rps9) of Methanothermobacter thermautotrophicus (strain ATCC 29096 / DSM 1053 / JCM 10044 / NBRC 100330 / Delta H) (Methanobacterium thermoautotrophicum).